We begin with the raw amino-acid sequence, 505 residues long: Outer capsid protein VP5 (505 aa).

An involved in membrane permeabilization region spans residues 1–42; that stretch reads MGKFTSFLKRAGNATKRALTSDSAKKMYKLAGKTLQRVVESE.

This sequence belongs to the orbivirus VP5 family.

It localises to the virion. Functionally, VP5 protein is one of the two proteins (with VP2) which constitute the virus particle outer capsid. Acts as a membrane permeabilization protein that mediates release of viral particles from endosomal compartments into the cytoplasm. Permeabilization activity is probably negatively regulated by VP2 and is triggered by endosomal degradation of VP2 and exposure to low pH. The polypeptide is Outer capsid protein VP5 (Segment-6) (African horse sickness virus (AHSV)).